The sequence spans 127 residues: Aspartate 1-decarboxylase (127 aa).

S25 serves as the catalytic Schiff-base intermediate with substrate; via pyruvic acid. S25 carries the pyruvic acid (Ser) modification. A substrate-binding site is contributed by T57. The Proton donor role is filled by Y58. 73–75 (GAA) lines the substrate pocket.

Belongs to the PanD family. Heterooctamer of four alpha and four beta subunits. The cofactor is pyruvate. Is synthesized initially as an inactive proenzyme, which is activated by self-cleavage at a specific serine bond to produce a beta-subunit with a hydroxyl group at its C-terminus and an alpha-subunit with a pyruvoyl group at its N-terminus.

It is found in the cytoplasm. It catalyses the reaction L-aspartate + H(+) = beta-alanine + CO2. It participates in cofactor biosynthesis; (R)-pantothenate biosynthesis; beta-alanine from L-aspartate: step 1/1. Catalyzes the pyruvoyl-dependent decarboxylation of aspartate to produce beta-alanine. The protein is Aspartate 1-decarboxylase of Anoxybacillus flavithermus (strain DSM 21510 / WK1).